A 577-amino-acid polypeptide reads, in one-letter code: Pentatricopeptide repeat-containing protein At2g01390 (577 aa).

10 PPR repeats span residues 121-155 (DHFT…GVLI), 156-190 (DTVT…GCEP), 191-225 (TVVS…RVSP), 226-260 (NCHT…GVQP), 261-295 (DKAA…GVVL), 382-416 (DSFV…GIHL), 417-451 (KKSA…QHSL), 452-482 (GCYQ…LPDD), 485-519 (GVAA…EIMP), and 520-554 (SLGT…LVAS).

Belongs to the PPR family. P subfamily.

This is Pentatricopeptide repeat-containing protein At2g01390 from Arabidopsis thaliana (Mouse-ear cress).